Consider the following 54-residue polypeptide: uncharacterized protein (54 aa).

This is an uncharacterized protein from Bacillus subtilis (strain 168).